Consider the following 399-residue polypeptide: MTSDEAKKARFCLHGGPSYEGYSFGAPVSVGGEVVFTTSLVGYPDSMTDPSYKGQILVFTQPLIGNYGVPDGSVRDQYGLLKYMESSKVHVSAIVVAEYAWEYSHWTAVQSLGDWCRKEGVAAIGGIDTRAVVQYLRESGSTMGRVDVEGAAASARVVDPSKVNLVAQVSTKSPFYIPGKPSRVNYDVALVDCGVKENILRCLVVRGVNVTVFPYDYDVCSIAHHFDGVFISNGPGDPIHYRNSTVANLRRLLQDPDLQQVPIFGICMGHQLLALAAGASTVKMKYGNRAHNIPALDLSTGQCHITSQNHGYAVDAATLPRDEFVPLFVNLNDKSNEGIIHVSRPIYSTQFHPEGKGGPMDCSFLFDEYVERMRCYRKLFRQEPFIRFPVIGLPKARVL.

The region spanning 187–379 (DVALVDCGVK…VERMRCYRKL (193 aa)) is the Glutamine amidotransferase type-1 domain. Catalysis depends on Cys-267, which acts as the Nucleophile. Catalysis depends on residues His-352 and Glu-354.

It belongs to the CarA family. As to quaternary structure, heterodimer composed of 2 chains; the small (or glutamine) chain promotes the hydrolysis of glutamine to ammonia, which is used by the large (or ammonia) chain to synthesize carbamoyl phosphate.

Its subcellular location is the cytoplasm. It catalyses the reaction hydrogencarbonate + L-glutamine + 2 ATP + H2O = carbamoyl phosphate + L-glutamate + 2 ADP + phosphate + 2 H(+). The catalysed reaction is L-glutamine + H2O = L-glutamate + NH4(+). It functions in the pathway amino-acid biosynthesis; L-arginine biosynthesis; carbamoyl phosphate from bicarbonate: step 1/1. Small subunit of the arginine-specific carbamoyl phosphate synthase (CPSase). CPSase catalyzes the formation of carbamoyl phosphate from the ammonia moiety of glutamine, carbonate, and phosphate donated by ATP, constituting the first step of 2 biosynthetic pathways, one leading to arginine and/or urea and the other to pyrimidine nucleotides. The small subunit (glutamine amidotransferase) binds and cleaves glutamine to supply the large subunit with the substrate ammonia. This Eremothecium gossypii (strain ATCC 10895 / CBS 109.51 / FGSC 9923 / NRRL Y-1056) (Yeast) protein is Carbamoyl phosphate synthase arginine-specific small chain (CPA1).